The primary structure comprises 504 residues: D-alanine--D-alanyl carrier protein ligase (504 aa).

152-153 contributes to the ATP binding site; it reads TS. D197 is a D-alanine binding site. Residue 292–297 participates in ATP binding; the sequence is NTYGPT. Residue V301 coordinates D-alanine. Residues D383, 394-397, and K492 each bind ATP; that span reads YNGR. A D-alanine-binding site is contributed by K492.

The protein belongs to the ATP-dependent AMP-binding enzyme family. DltA subfamily.

It localises to the cytoplasm. The catalysed reaction is holo-[D-alanyl-carrier protein] + D-alanine + ATP = D-alanyl-[D-alanyl-carrier protein] + AMP + diphosphate. The protein operates within cell wall biogenesis; lipoteichoic acid biosynthesis. In terms of biological role, catalyzes the first step in the D-alanylation of lipoteichoic acid (LTA), the activation of D-alanine and its transfer onto the D-alanyl carrier protein (Dcp) DltC. In an ATP-dependent two-step reaction, forms a high energy D-alanyl-AMP intermediate, followed by transfer of the D-alanyl residue as a thiol ester to the phosphopantheinyl prosthetic group of the Dcp. D-alanylation of LTA plays an important role in modulating the properties of the cell wall in Gram-positive bacteria, influencing the net charge of the cell wall. This Bacillus cereus (strain G9842) protein is D-alanine--D-alanyl carrier protein ligase.